Here is a 148-residue protein sequence, read N- to C-terminus: UPF0540 protein At1g62000 (148 aa).

An N-terminal signal peptide occupies residues M1–A21. Over residues R123–S132 the composition is skewed to low complexity. The interval R123 to D148 is disordered.

This sequence belongs to the UPF0540 family.

The chain is UPF0540 protein At1g62000 from Arabidopsis thaliana (Mouse-ear cress).